Here is a 1371-residue protein sequence, read N- to C-terminus: F-actin-uncapping protein LRRC16A (1371 aa).

Met1 carries the post-translational modification N-acetylmethionine. At Ser122 the chain carries Phosphoserine. LRR repeat units follow at residues 245 to 269 (SNRL…LASA), 275 to 298 (NSGL…SLSI), 304 to 327 (PKGL…SLSQ), 336 to 363 (ASTL…FLAQ), 391 to 418 (LQYL…SFKQ), 423 to 447 (SLAL…LLLG), 481 to 506 (IHNI…VWLS), 543 to 566 (ESPL…IINA), 570 to 593 (NTSL…MLAK), and 654 to 678 (LQKI…AYRL). Positions 710 to 734 (GDAIQEDLKSAERLMRDAKNSKTLL) form a coiled coil. Phosphothreonine is present on Thr916. Disordered regions lie at residues 957–1000 (PFPS…QPTQ), 1036–1159 (KMDS…RRYG), and 1172–1371 (KAKQ…FIFV). Residues 958–981 (FPSLRQEKRSSGFISELPSEEGKK) form an LRR 11 repeat. An inhibits capping activity of CAPZA2 region spans residues 958-1082 (FPSLRQEKRS…LIKSRSKSER (125 aa)). Ser968 bears the Phosphoserine mark. 2 stretches are compositionally biased toward basic and acidic residues: residues 977 to 986 (EEGKKLEHFT) and 1036 to 1061 (KMDS…EKKK). The segment at 1055–1089 (GGDEKKKRDSRKSSGFLNLIKSRSKSERPPTILMT) is necessary for localization at the cell membrane. Phosphoserine is present on residues Ser1067 and Ser1094. Composition is skewed to basic and acidic residues over residues 1106–1130 (CPRK…KTPD) and 1139–1148 (EIGKVERSDS). Residues 1190-1199 (AVSQDSSSPA) are compositionally biased toward polar residues. Thr1228 is subject to Phosphothreonine. Positions 1231 to 1243 (KNTKAEPKAEAGS) are enriched in basic and acidic residues. Residues 1244-1265 (RSRSSSSTPTSPKPLLQSPKPS) are compositionally biased toward low complexity. 6 positions are modified to phosphoserine: Ser1280, Ser1288, Ser1291, Ser1315, Ser1324, and Ser1331. Polar residues predominate over residues 1313 to 1326 (QSSPQPSPRTFSQE). The segment covering 1340–1353 (QEQKQRSSSKDGHQ) has biased composition (basic and acidic residues). Ser1360 is subject to Phosphoserine.

This sequence belongs to the CARMIL family. In terms of assembly, homodimer. Interacts (via C-terminus) with heterodimer capping protein (CP); this interaction uncaps barbed ends capped by CP, enhances barbed-end actin polymerization and promotes lamellipodial formation and cell migration. Interacts with heterodimer capping protein (CP). Interacts with MYO1E. Interacts with TRIO. In terms of tissue distribution, expressed in lung, placenta, small intestine, liver, thymus, colon, skeletal muscle, heart and brain. Higher expression in kidney.

The protein localises to the cytoplasm. It localises to the cytoskeleton. It is found in the cell membrane. The protein resides in the cell projection. Its subcellular location is the lamellipodium. Functionally, cell membrane-cytoskeleton-associated protein that plays a role in the regulation of actin polymerization at the barbed end of actin filaments. Prevents F-actin heterodimeric capping protein (CP) activity at the leading edges of migrating cells, and hence generates uncapped barbed ends and enhances actin polymerization, however, seems unable to nucleate filaments. Plays a role in lamellipodial protrusion formations and cell migration. This is F-actin-uncapping protein LRRC16A from Homo sapiens (Human).